A 161-amino-acid polypeptide reads, in one-letter code: Regulator of ribonuclease activity A (161 aa).

Belongs to the RraA family. Homotrimer. Binds to both RNA-binding sites in the C-terminal region of Rne and to RhlB.

The protein localises to the cytoplasm. Globally modulates RNA abundance by binding to RNase E (Rne) and regulating its endonucleolytic activity. Can modulate Rne action in a substrate-dependent manner by altering the composition of the degradosome. Modulates RNA-binding and helicase activities of the degradosome. In Erwinia tasmaniensis (strain DSM 17950 / CFBP 7177 / CIP 109463 / NCPPB 4357 / Et1/99), this protein is Regulator of ribonuclease activity A.